The chain runs to 1054 residues: MGWKILPVCLSLLLPVVLIQQVSSQDLSSCAGRCGEGYSRDATCNCDYNCQHYMECCPDFKRVCSPELSCKGRCFESFARGRECDCDSQCKQYGKCCADYDSFCEEVHNSTSPSSKTAPTPAGASDTIKSTTKRSPKSPTTRTIKVVESEELTEEHSDSENQESSSSSSSSSSTIRKIKSSKNSANRELQKNPNVKDNKKNTPKKKPNPEPPAVDEAGSGLDNGEFKLTPPPPDPPTTPHSKVATSPKTTAAKPVTPKPSLAPNSETSKEASLASNKETTVETKETTATNKQSSASKKKTTSVKETRSAEKTSDKDVEPTSTTPKNSAPTTTKKPVTTTKESKFLPLPQEPEPTTAKEPPPTTKKPEPTTRKEPEPTTPKEPEPTTPKEPEPTTPKEPEPTTPKEPPPTTKKPEPTTPKEPGPTTPKEPEPTTTKEPEPTTTKEPESTTRKEPEPTTPKEPEPTTPKEPEPTTLKEPEPTTPKEPEPTTPKEPEPTTPKEPEPTTPKEPEPTTPKEPEPTTPKEPEPTTPKEPEPTTPKEPEPTTPKKPEPTTPKEPVPTTPKEPEPTTPKEPEPTTPKEPEPTTRKEPEPTTPKEPEPTTPKEPEPTTPKKPEPTTTSPKTTTLKATTLAPKVTAPAEEIQNKPEETTPASEDSDDSKTTLKPQKPTKAPKPTKKPTKAPKKPTSTKKPKTPKTRKPKTTPSPLKTTSATPELNTTPLEVMLPTTTIPKQTPNPETAEVNPDHEDADGGEGEKPLIPGPPVLFPTAIPGTDLLAGRLNQGININPMLSDETNLCNGKPVDGLTTLRNGTLVAFRGHYFWMLNPFRPPSPPRRITEVWGIPSPIDTVFTRCNCEGKTFFFKDSQYWRFTNDVVDPGYPKQIVKGFGGLTGKIVAALSIAKYKDRPESVYFFKRGGNIQQYTYKQEPMKKCTGRRPAINYSVYGEAAQVRRRRFERAVGPFQTHTFRIHYSVPMRVSYQDKGFLHNEVKVSTMWRGFPNVVTSAITLPNIRKPDGYDYYAFSKDQYYNIDVPTRTARAITTRSGQTLSKIWYNCP.

Residues 1 to 24 (MGWKILPVCLSLLLPVVLIQQVSS) form the signal peptide. SMB domains lie at 26 to 69 (DLSS…PELS) and 66 to 108 (PELS…EEVH). 14 cysteine pairs are disulfide-bonded: C30/C34, C30/C46, C34/C64, C44/C46, C44/C57, C50/C56, C57/C64, C70/C74, C70/C86, C74/C104, C84/C86, C84/C97, C90/C96, and C97/C104. N-linked (GlcNAc...) asparagine glycosylation is present at N109. Positions 110–125 (STSPSSKTAPTPAGAS) are enriched in low complexity. The disordered stretch occupies residues 110–764 (STSPSSKTAP…PLIPGPPVLF (655 aa)). S135 is a glycosylation site (O-linked (GalNAc...) serine). Residues 162–175 (QESSSSSSSSSSTI) are compositionally biased toward low complexity. Over residues 188 to 200 (ELQKNPNVKDNKK) the composition is skewed to basic and acidic residues. Residues 229–238 (TPPPPDPPTT) are compositionally biased toward pro residues. 2 O-linked (GalNAc...) threonine glycosylation sites follow: T237 and T250. The span at 286–295 (TTATNKQSSA) shows a compositional bias: low complexity. Residue T301 is glycosylated (O-linked (GalNAc...) threonine). An O-linked (GalNAc...) serine glycan is attached at S302. Residues 302-318 (SVKETRSAEKTSDKDVE) are compositionally biased toward basic and acidic residues. Residue T306 is glycosylated (O-linked (GalNAc...) threonine). O-linked (GalNAc...) serine glycosylation occurs at S313. The stretch at 317–324 (VEPTSTTP) is one 1; approximate repeat. Positions 317–618 (VEPTSTTPKN…TPKKPEPTTT (302 aa)) are 37 X 8 AA repeats of K-X-P-X-P-T-T-X. Positions 319–328 (PTSTTPKNSA) are enriched in polar residues. The 2; approximate repeat unit spans residues 325 to 332 (KNSAPTTT). S327 carries O-linked (GalNAc...) serine glycosylation. Low complexity predominate over residues 329-339 (PTTTKKPVTTT). Residues T330, T338, T354, T362, T369, T377, T378, T385, T386, T393, and T394 are each glycosylated (O-linked (GalNAc...) threonine). Residues 333–340 (KKPVTTTK) form a 3; approximate repeat. Residues 349–356 (QEPEPTTA) form a 4; approximate repeat. The stretch at 357–364 (KEPPPTTK) is repeat 5. A compositionally biased stretch (basic and acidic residues) spans 364–399 (KKPEPTTRKEPEPTTPKEPEPTTPKEPEPTTPKEPE). A 6; approximate repeat occupies 365–371 (KPEPTTR). 5 repeat units span residues 372–379 (KEPEPTTP), 380–387 (KEPEPTTP), 388–395 (KEPEPTTP), 396–403 (KEPEPTTP), and 404–411 (KEPPPTTK). The segment covering 400-426 (PTTPKEPPPTTKKPEPTTPKEPGPTTP) has biased composition (pro residues). Residues 412 to 418 (KPEPTTP) form a 12; approximate repeat. T416, T417, T424, T432, T433, T440, T441, and T448 each carry an O-linked (GalNAc...) threonine glycan. A run of 3 repeats spans residues 419–426 (KEPGPTTP), 427–434 (KEPEPTTT), and 435–442 (KEPEPTTT). Residues 427–550 (KEPEPTTTKE…PEPTTPKKPE (124 aa)) show a composition bias toward basic and acidic residues. Residues 443–450 (KEPESTTR) form a 16; approximate repeat. A run of 21 repeats spans residues 451-458 (KEPEPTTP), 459-466 (KEPEPTTP), 467-474 (KEPEPTTL), 475-482 (KEPEPTTP), 483-490 (KEPEPTTP), 491-498 (KEPEPTTP), 499-506 (KEPEPTTP), 507-514 (KEPEPTTP), 515-522 (KEPEPTTP), 523-530 (KEPEPTTP), 531-538 (KEPEPTTP), 539-546 (KEPEPTTP), 547-554 (KKPEPTTP), 555-562 (KEPVPTTP), 563-570 (KEPEPTTP), 571-578 (KEPEPTTP), 579-586 (KEPEPTTR), 587-594 (KEPEPTTP), 595-602 (KEPEPTTP), 603-610 (KEPEPTTP), and 611-618 (KKPEPTTT). 14 O-linked (GalNAc...) threonine glycosylation sites follow: T472, T480, T481, T488, T489, T496, T497, T504, T505, T512, T520, T521, T528, and T529. Positions 551-562 (PTTPKEPVPTTP) are enriched in pro residues. Residues T553, T560, T561, T568, T569, T576, and T577 are each glycosylated (O-linked (GalNAc...) threonine). Residues 563-614 (KEPEPTTPKEPEPTTPKEPEPTTRKEPEPTTPKEPEPTTPKEPEPTTPKKPE) are compositionally biased toward basic and acidic residues. O-linked (GalNAc...) threonine glycans are attached at residues T592, T600, and T601. Residues 615–624 (PTTTSPKTTT) show a composition bias toward low complexity. 5 O-linked (GalNAc...) threonine glycosylation sites follow: T622, T624, T628, T629, and T692. The span at 672–699 (KPTKKPTKAPKKPTSTKKPKTPKTRKPK) shows a compositional bias: basic residues. Over residues 700–712 (TTPSPLKTTSATP) the composition is skewed to low complexity. A compositionally biased stretch (polar residues) spans 713–735 (ELNTTPLEVMLPTTTIPKQTPNP). C795 and C1053 are joined by a disulfide. 2 Hemopexin repeats span residues 797–840 (GKPV…VWGI) and 841–888 (PSPI…FGGL). N-linked (GlcNAc...) asparagine glycosylation is present at N808. A glycan (O-linked (GalNAc...) threonine) is linked at T810. An N-linked (GlcNAc...) asparagine glycan is attached at N938.

As to quaternary structure, homodimer; disulfide-linked. Post-translationally, N-glycosylated. In terms of processing, O-glycosylated; contains glycosaminoglycan chondroitin sulfate and keratan sulfate. O-glycosylated with sialylated oligosaccharides which are predominantly represented by the monosialylated core type I structure, NeuNAcalpha2-3Galbeta1-3GalNAc, with smaller amounts of disialylated O-glycans. The disulfide bond between Cys-795 and Cys-1053 is essential for protein cleavage. Post-translationally, proteolytically cleaved by cathepsin CTSG. As to expression, highly expressed in cartilage, bone and liver and weakly expressed in heart, brain and muscle. Expressed in the surface chondrocytes and in synovial intimal cells. Isoform B is expressed in bone, small intestine, muscle, testis, heart, liver and lung. Isoform C and isoform D are widely expressed.

It localises to the secreted. Functionally, plays a role in boundary lubrication within articulating joints. Prevents protein deposition onto cartilage from synovial fluid by controlling adhesion-dependent synovial growth and inhibiting the adhesion of synovial cells to the cartilage surface. This is Proteoglycan 4 (Prg4) from Mus musculus (Mouse).